The chain runs to 1025 residues: Multidrug resistance protein MdtC (1025 aa).

12 helical membrane-spanning segments follow: residues 3 to 23, 333 to 353, 360 to 380, 387 to 407, 431 to 451, 463 to 483, 528 to 548, 853 to 873, 875 to 895, 897 to 917, 953 to 973, and 984 to 1004; these read FFAL…AITL, EVEQ…FLFL, IIPA…MYLC, LSLM…IVVL, VGFT…PLLL, FAVT…TLTP, LVGV…ISIP, VILI…LYES, VHPL…LLAL, LFNA…IGIV, PIMM…LSGG, and ITIV…TPVV.

The protein belongs to the resistance-nodulation-cell division (RND) (TC 2.A.6) family. MdtC subfamily. As to quaternary structure, part of a tripartite efflux system composed of MdtA, MdtB and MdtC. MdtC forms a heteromultimer with MdtB.

The protein resides in the cell inner membrane. The MdtABC tripartite complex confers resistance against novobiocin and deoxycholate. The chain is Multidrug resistance protein MdtC from Escherichia fergusonii (strain ATCC 35469 / DSM 13698 / CCUG 18766 / IAM 14443 / JCM 21226 / LMG 7866 / NBRC 102419 / NCTC 12128 / CDC 0568-73).